Consider the following 487-residue polypeptide: Citrate/succinate antiporter (487 aa).

14 helical membrane passes run 11 to 31 (LLAPLVVMGVMFLIPVPDGMP), 60 to 80 (FIAVTICVIGSNYLLFDAKEL), 95 to 115 (GLAGFSSTTVWLVFGAFIFAL), 138 to 158 (TLTLGYAIVIIDILLAPFTPS), 190 to 210 (IGGYLMWMMVISTSLSSSMFV), 214 to 234 (APNVLGLEFVSKIAGIQISWL), 237 to 257 (FLCFLPVGVILLIIAPWLSYV), 288 to 308 (WTLIGLVLLSLGLWVFGSEVI), 309 to 329 (NATAVGLLAVSLMLALHVVPW), 345 to 365 (LATLVVMANGLTRSGFIDWFA), 379 to 399 (ATVIVLVLVFYFAHYLFASLS), 401 to 421 (HTATMLPVILAVGKGIPGVPM), 424 to 444 (LCILLVLSIGIMGCLTPYATG), and 463 to 483 (LGAIFGVIYISMLLLVGWPIL).

This sequence belongs to the SLC13A/DASS transporter (TC 2.A.47) family. DIT1 subfamily.

The protein localises to the cell inner membrane. Responsible for the uptake of citrate in exchange to the efflux of succinate. Has a relatively broad specificity for C(4)-dicarboxylates and tricarboxylates. This is Citrate/succinate antiporter (citT) from Escherichia coli O157:H7.